The sequence spans 505 residues: ATP synthase subunit beta (505 aa).

157–164 contributes to the ATP binding site; sequence GGAGVGKT.

The protein belongs to the ATPase alpha/beta chains family. In terms of assembly, F-type ATPases have 2 components, CF(1) - the catalytic core - and CF(0) - the membrane proton channel. CF(1) has five subunits: alpha(3), beta(3), gamma(1), delta(1), epsilon(1). CF(0) has three main subunits: a(1), b(2) and c(9-12). The alpha and beta chains form an alternating ring which encloses part of the gamma chain. CF(1) is attached to CF(0) by a central stalk formed by the gamma and epsilon chains, while a peripheral stalk is formed by the delta and b chains.

Its subcellular location is the cell inner membrane. The enzyme catalyses ATP + H2O + 4 H(+)(in) = ADP + phosphate + 5 H(+)(out). Produces ATP from ADP in the presence of a proton gradient across the membrane. The catalytic sites are hosted primarily by the beta subunits. The polypeptide is ATP synthase subunit beta (Bacteroides fragilis (strain ATCC 25285 / DSM 2151 / CCUG 4856 / JCM 11019 / LMG 10263 / NCTC 9343 / Onslow / VPI 2553 / EN-2)).